Consider the following 574-residue polypeptide: uncharacterized protein (574 aa).

Residues 297–327 (STASKSKKRRKDEVSGAQRNSSPLPQDAVSS) are disordered. The span at 313-327 (AQRNSSPLPQDAVSS) shows a compositional bias: polar residues.

This is an uncharacterized protein from Macaca fascicularis (Crab-eating macaque).